A 252-amino-acid chain; its full sequence is MKNEIAAVVFFFTRLVRKHDKLKKEAVERFAEKLTQILQEKYKNHWYPEKPSKGQAYRCIRVNKFQRVDPDVLKACEDSCILYSDLGLPKELTLWVDPCEVCCRYGKKNNAFIVASFENEDENKDEISKKVSRALDKVTSDYHSGSSSSDEDTSKEVEVKPSAVATTPSPVYQISELIFPPLPMWHPLPRKKPGMYRGGGHQSHYPPPVPFAYPSPGRKNKAFRPIPVTWVPPPGMHCDRNHWINPHMLAPH.

Residues 138-162 form a disordered region; it reads VTSDYHSGSSSSDEDTSKEVEVKPS.

Belongs to the BTG family. As to expression, highly expressed in the brain.

Overexpression impairs serum-induced cell cycle progression from the G0/G1 to S phase. This is Protein BTG3 from Rattus norvegicus (Rat).